The primary structure comprises 298 residues: Bifunctional protein FolD (298 aa).

NADP(+) contacts are provided by residues 166–168 (GRS), serine 191, and isoleucine 232.

It belongs to the tetrahydrofolate dehydrogenase/cyclohydrolase family. Homodimer.

It catalyses the reaction (6R)-5,10-methylene-5,6,7,8-tetrahydrofolate + NADP(+) = (6R)-5,10-methenyltetrahydrofolate + NADPH. The catalysed reaction is (6R)-5,10-methenyltetrahydrofolate + H2O = (6R)-10-formyltetrahydrofolate + H(+). It functions in the pathway one-carbon metabolism; tetrahydrofolate interconversion. Its function is as follows. Catalyzes the oxidation of 5,10-methylenetetrahydrofolate to 5,10-methenyltetrahydrofolate and then the hydrolysis of 5,10-methenyltetrahydrofolate to 10-formyltetrahydrofolate. This is Bifunctional protein FolD from Erythrobacter litoralis (strain HTCC2594).